The primary structure comprises 355 residues: WD repeat domain phosphoinositide-interacting protein 4 (355 aa).

WD repeat units lie at residues 2–40 (SQQRGVNGLRFNQDQSCFCCAMETGVRIFNIEPLMEKGH) and 185–225 (AHQS…QLVE). Residues 226–229 (LRRG) carry the L/FRRG motif motif. The stretch at 230–269 (TDPATLYCINFSHDSSFLCSSSDKGTVHIFALKDTKLNRR) is one WD 3 repeat.

This sequence belongs to the WD repeat PROPPIN family.

It localises to the preautophagosomal structure. Its function is as follows. Component of the autophagy machinery that controls the major intracellular degradation process by which cytoplasmic materials are packaged into autophagosomes and delivered to lysosomes for degradation. Binds phosphatidylinositol 3-phosphate (PtdIns3P). In Xenopus laevis (African clawed frog), this protein is WD repeat domain phosphoinositide-interacting protein 4 (wdr45).